The primary structure comprises 204 residues: FMN-dependent NADH:quinone oxidoreductase 2 (204 aa).

Residues Ser-10 and 16 to 18 (SIS) each bind FMN.

This sequence belongs to the azoreductase type 1 family. In terms of assembly, homodimer. FMN is required as a cofactor.

The enzyme catalyses 2 a quinone + NADH + H(+) = 2 a 1,4-benzosemiquinone + NAD(+). It catalyses the reaction N,N-dimethyl-1,4-phenylenediamine + anthranilate + 2 NAD(+) = 2-(4-dimethylaminophenyl)diazenylbenzoate + 2 NADH + 2 H(+). Quinone reductase that provides resistance to thiol-specific stress caused by electrophilic quinones. Functionally, also exhibits azoreductase activity. Catalyzes the reductive cleavage of the azo bond in aromatic azo compounds to the corresponding amines. The protein is FMN-dependent NADH:quinone oxidoreductase 2 of Jannaschia sp. (strain CCS1).